Consider the following 706-residue polypeptide: Semenogelin-2 (706 aa).

The first 23 residues, Met1–Gly23, serve as a signal peptide directing secretion. Disordered regions lie at residues Lys25–Ser62, Lys131–Phe156, and Asn276–His678. Residues Gly50–Ser59 are compositionally biased toward basic and acidic residues. The segment covering His137 to Ser151 has biased composition (polar residues). Over residues Thr297–Ser308 the composition is skewed to basic and acidic residues. Residues Lys329 to Gln339 are compositionally biased toward polar residues. Basic and acidic residues predominate over residues Asp340–Lys349. Over residues Lys389–Gln399 the composition is skewed to polar residues. Residues Asp400–Lys409 are compositionally biased toward basic and acidic residues. Over residues Lys449 to Gln459 the composition is skewed to polar residues. Residues Asp460–Lys469 are compositionally biased toward basic and acidic residues. Residues Lys509–Gln519 are compositionally biased toward polar residues. The segment covering Asp520 to Lys529 has biased composition (basic and acidic residues). Residues Lys569–Gln579 are compositionally biased toward polar residues. Residues Asp580–Lys589 show a composition bias toward basic and acidic residues. Composition is skewed to polar residues over residues Lys611 to Thr622 and Ser630 to Lys653. The span at Ser654–Tyr670 shows a compositional bias: basic and acidic residues.

The protein belongs to the semenogelin family. In terms of assembly, interacts with SERPINA5.

The protein localises to the secreted. Participates in the formation of a gel matrix (sperm coagulum) entrapping the accessory gland secretions and ejaculated spermatozoa. The chain is Semenogelin-2 (SEMG2) from Macaca mulatta (Rhesus macaque).